The primary structure comprises 128 residues: Sulfurtransferase TusD (128 aa).

Cysteine 78 serves as the catalytic Cysteine persulfide intermediate.

The protein belongs to the DsrE/TusD family. As to quaternary structure, heterohexamer, formed by a dimer of trimers. The hexameric TusBCD complex contains 2 copies each of TusB, TusC and TusD. The TusBCD complex interacts with TusE.

The protein localises to the cytoplasm. Functionally, part of a sulfur-relay system required for 2-thiolation of 5-methylaminomethyl-2-thiouridine (mnm(5)s(2)U) at tRNA wobble positions. Accepts sulfur from TusA and transfers it in turn to TusE. In Klebsiella pneumoniae subsp. pneumoniae (strain ATCC 700721 / MGH 78578), this protein is Sulfurtransferase TusD.